The chain runs to 920 residues: Rho guanine nucleotide exchange factor 1 (920 aa).

The RGSL domain occupies 39 to 230 (DQNSQFQSLE…SLYMRHLGVR (192 aa)). The disordered stretch occupies residues 231–404 (TKSGDKKSGR…PGWRELVPPD (174 aa)). The span at 281 to 311 (DCRHLKVEADAEKPGPADRKGGLGMSSRDRT) shows a compositional bias: basic and acidic residues. The segment covering 364-380 (STEDNGETESPEPGDDG) has biased composition (acidic residues). Residues serine 373, glycine 386, glutamate 390, serine 408, and serine 412 each carry the phosphoserine modification. One can recognise a DH domain in the interval 415–604 (KRQEVISELL…REILHHVNQA (190 aa)). Phosphothreonine is present on residues arginine 432 and threonine 694. A PH domain is found at 646–759 (KLVHEGPLTW…WCNLITETAG (114 aa)). Tyrosine 737 bears the Phosphotyrosine; by JAK2 mark. 2 disordered regions span residues 764–797 (PAPA…AEMA) and 840–864 (TEED…PGPV). A coiled-coil region spans residues 865–894 (HTQEIEENLLSLEVAIRQLEELEEEFCRLR). At serine 905 the chain carries Phosphoserine.

Interacts with RHOA, GNA12 and GNA13. Homooligomerizes through the coiled coil region. Interacts with CTNNAL1. May interact with CCPG1. In terms of processing, phosphorylated by PKCA. Angiotensin-2 induced Tyr-737 phosphorylation is mediated by JAK2. Isoform 5 is phosphorylated at 'Ser-390'. Ubiquitously expressed.

The protein localises to the cytoplasm. The protein resides in the membrane. In terms of biological role, seems to play a role in the regulation of RhoA GTPase by guanine nucleotide-binding alpha-12 (GNA12) and alpha-13 (GNA13) subunits. Acts as a GTPase-activating protein (GAP) for GNA12 and GNA13, and as guanine nucleotide exchange factor (GEF) for RhoA GTPase. Activated G alpha 13/GNA13 stimulates the RhoGEF activity through interaction with the RGS-like domain. This GEF activity is inhibited by binding to activated GNA12. Mediates angiotensin-2-induced RhoA activation. Isoform 3 and isoform 4 do not homooligomerize and show an enhanced RhoGEF activity. In lymphoid follicles, may trigger activation of GNA13 as part of S1PR2-dependent signaling pathway that leads to inhibition of germinal center (GC) B cell growth and migration outside the GC niche. The polypeptide is Rho guanine nucleotide exchange factor 1 (Arhgef1) (Mus musculus (Mouse)).